The chain runs to 408 residues: Argininosuccinate synthase (408 aa).

Residues 14–22 and Ala41 each bind ATP; that span reads AYSGGLDTS. L-citrulline is bound by residues Tyr92 and Ser97. An ATP-binding site is contributed by Gly122. L-aspartate-binding residues include Thr124, Asn128, and Asp129. An L-citrulline-binding site is contributed by Asn128. 5 residues coordinate L-citrulline: Arg132, Ser181, Ser190, Glu266, and Tyr278.

It belongs to the argininosuccinate synthase family. Type 1 subfamily. As to quaternary structure, homotetramer.

Its subcellular location is the cytoplasm. It carries out the reaction L-citrulline + L-aspartate + ATP = 2-(N(omega)-L-arginino)succinate + AMP + diphosphate + H(+). It functions in the pathway amino-acid biosynthesis; L-arginine biosynthesis; L-arginine from L-ornithine and carbamoyl phosphate: step 2/3. The sequence is that of Argininosuccinate synthase from Pelobacter propionicus (strain DSM 2379 / NBRC 103807 / OttBd1).